The sequence spans 527 residues: Palmitoleoyl-protein carboxylesterase NOTUM (527 aa).

The signal sequence occupies residues 1–19; that stretch reads MKSYLILNTLLLSLLKING. N-linked (GlcNAc...) asparagine glycans are attached at residues Asn-64, Asn-86, and Asn-104. Ser-203 functions as the Charge relay system in the catalytic mechanism. N-linked (GlcNAc...) asparagine glycosylation occurs at Asn-249. Residues Asp-311 and His-359 each act as charge relay system in the active site. Asn-451 is a glycosylation site (N-linked (GlcNAc...) asparagine).

It belongs to the pectinacetylesterase family. Notum subfamily. Expressed in the anterior pole.

It localises to the secreted. It carries out the reaction [Wnt protein]-O-(9Z)-hexadecenoyl-L-serine + H2O = [Wnt protein]-L-serine + (9Z)-hexadecenoate + H(+). Carboxylesterase that acts as a key negative regulator of the Wnt signaling pathway. Acts by specifically mediating depalmitoleoylation of WNT proteins. Serine palmitoleoylation of WNT proteins is required for efficient binding to frizzled receptors. Promotes head regeneration following amputation by inhibiting the Wnt signaling pathway. The protein is Palmitoleoyl-protein carboxylesterase NOTUM of Schmidtea mediterranea (Freshwater planarian flatworm).